We begin with the raw amino-acid sequence, 479 residues long: Odorant receptor coreceptor (479 aa).

The Cytoplasmic segment spans residues 1–43; the sequence is MMKMKQQGLVADLLPNIRVMKFFGHFVFNYYDDNSSKYLHKIF. Residues 44-64 traverse the membrane as a helical segment; sequence CCVNLFLLLLQFALCAVNLII. Topologically, residues 65 to 73 are extracellular; the sequence is ESADVDDLT. Residues 74-94 form a helical membrane-spanning segment; it reads ANTITLLFFTHSIVKIIYFAV. Residues 95 to 133 are Cytoplasmic-facing; it reads RSKYFYRTWAIWNNPNSHPLFAESNARYHAIALKKMRLL. The chain crosses the membrane as a helical span at residues 134 to 154; it reads LFLVGATTVLSAIAWTVLTFF. Residues 155–190 lie on the Extracellular side of the membrane; that stretch reads EHPIRKLVDPVTNETTIIELPQLLLRSYYPFDASKG. An N-linked (GlcNAc...) asparagine glycan is attached at asparagine 167. A helical transmembrane segment spans residues 191–211; that stretch reads IMHVIVLIYQFYWVLFMLIDA. The Cytoplasmic portion of the chain corresponds to 212–350; it reads NSLDVLFCSW…IVRLVTAVGD (139 aa). Residues 261-280 are disordered; sequence SAEHLRESENQPPPPVPPQG. Residues 351–371 traverse the membrane as a helical segment; it reads AYGFALLLHMLTTTITLTLLA. The Extracellular portion of the chain corresponds to 372-383; the sequence is YQATKVNGVNVY. A helical transmembrane segment spans residues 384–404; the sequence is AASTIGYIIYTFGQVFLFCIF. Residues 405–455 lie on the Cytoplasmic side of the membrane; the sequence is GNRLIEESTSVMEAAYSCHWYDGSEEAKTFVQIVCQQCQKAMSISGAKFFT. The chain crosses the membrane as a helical span at residues 456 to 476; that stretch reads VSLDLFASVLGAVVTYFMVLV. Over 477–479 the chain is Extracellular; sequence QLK.

It belongs to the insect chemoreceptor superfamily. Heteromeric odorant receptor channel (TC 1.A.69) family. Orco subfamily. Heterodimer with conventional odorant receptors (ORs).

It localises to the cell membrane. Functionally, odorant coreceptor which complexes with conventional odorant receptors (ORs) to form odorant-sensing units, providing sensitive and prolonged odorant signaling and calcium permeability. Obligate coreceptor of all odorant receptors. Orco is a universal and integral part of the functional odorant receptor, involved in the dendritic localization of other olfactory receptors. Can form functional ion channels in the absence of an odor-binding odorant receptor. Plays a central role in the perception of olfactory stimuli in ants and is essential for ant social organization. Required for pheromone sensing and mating behavior. Also required for the development and maintenance of odorant receptor neurons (ORNs) and of antennal lobe glomeruli. This is Odorant receptor coreceptor from Harpegnathos saltator (Jerdon's jumping ant).